A 70-amino-acid polypeptide reads, in one-letter code: Small ribosomal subunit protein bS21 (70 aa).

The protein belongs to the bacterial ribosomal protein bS21 family.

In Helicobacter pylori (strain P12), this protein is Small ribosomal subunit protein bS21.